Here is a 445-residue protein sequence, read N- to C-terminus: Probable glycine dehydrogenase (decarboxylating) subunit 1 (445 aa).

Belongs to the GcvP family. N-terminal subunit subfamily. The glycine cleavage system is composed of four proteins: P, T, L and H. In this organism, the P 'protein' is a heterodimer of two subunits.

It carries out the reaction N(6)-[(R)-lipoyl]-L-lysyl-[glycine-cleavage complex H protein] + glycine + H(+) = N(6)-[(R)-S(8)-aminomethyldihydrolipoyl]-L-lysyl-[glycine-cleavage complex H protein] + CO2. In terms of biological role, the glycine cleavage system catalyzes the degradation of glycine. The P protein binds the alpha-amino group of glycine through its pyridoxal phosphate cofactor; CO(2) is released and the remaining methylamine moiety is then transferred to the lipoamide cofactor of the H protein. The protein is Probable glycine dehydrogenase (decarboxylating) subunit 1 of Anaeromyxobacter sp. (strain Fw109-5).